The primary structure comprises 207 residues: Microtubule-associated protein Jupiter (207 aa).

At serine 30 the chain carries Phosphoserine. A phosphothreonine mark is found at threonine 41 and threonine 102. Residues serine 111, serine 138, and serine 149 each carry the phosphoserine modification. 2 disordered regions span residues 129–174 (KGKY…YKAG) and 188–207 (GNQV…SGLW). The span at 136-149 (SGSVSSASSSVSSS) shows a compositional bias: low complexity. The segment covering 150–164 (TENLKINVGNRSDGN) has biased composition (polar residues).

The protein belongs to the MAP Jupiter family.

It is found in the nucleus. Its subcellular location is the cytoplasm. It localises to the cytoskeleton. The protein localises to the spindle. Binds to all microtubule populations. The polypeptide is Microtubule-associated protein Jupiter (Drosophila grimshawi (Hawaiian fruit fly)).